Reading from the N-terminus, the 420-residue chain is MTKWKRANPNGTRDYLFEECTLIEEVEQKLRLTFLERGYEEIRTPTIEFYDVFAFQNRPIDEEKMYKFFDEKGRIIVLRPDMTIPLARVIGTQRWDTPLKVTYSGNVFRANESHSGKYNEIVQSGIEVIGIDNVRAEIECVISVIQALQKLKVQSFTIEIGQVQLYKCIVKKLSIQDEEERVLRTYIESKNYAALSNFIGEKKLDRCDETVRLLEKLPRLFGNLEVIEEAEKLASSNEMKMAIARVKEMYETIEMLGYGSYISIDLGMIQHLDYYTGVIFKGYIYEIGEEIVSGGRYDELIGNFGEMLPAVGLAVQVNQIVKALQEQQEPYERNQIDIVIHYELNRLAEAERLRNLLRKDGKNAWLSLFSNLSDTFQFARKNKIGTVVEAQNEYLVEYVWNEKWVVQKEGEASCVTFKLR.

The protein belongs to the class-II aminoacyl-tRNA synthetase family. HisZ subfamily. As to quaternary structure, heteromultimer composed of HisG and HisZ subunits.

The protein resides in the cytoplasm. It participates in amino-acid biosynthesis; L-histidine biosynthesis; L-histidine from 5-phospho-alpha-D-ribose 1-diphosphate: step 1/9. In terms of biological role, required for the first step of histidine biosynthesis. May allow the feedback regulation of ATP phosphoribosyltransferase activity by histidine. This is ATP phosphoribosyltransferase regulatory subunit from Bacillus cereus (strain ATCC 14579 / DSM 31 / CCUG 7414 / JCM 2152 / NBRC 15305 / NCIMB 9373 / NCTC 2599 / NRRL B-3711).